A 374-amino-acid chain; its full sequence is UPF0754 membrane protein SAB1779c (374 aa).

2 consecutive transmembrane segments (helical) span residues 4 to 24 (LFIIIFMIVVGAIIGGITNVI) and 354 to 374 (SLGFILGGIIGFFQGLVAIFV).

This sequence belongs to the UPF0754 family.

The protein resides in the cell membrane. The polypeptide is UPF0754 membrane protein SAB1779c (Staphylococcus aureus (strain bovine RF122 / ET3-1)).